The following is a 633-amino-acid chain: tRNA uridine 5-carboxymethylaminomethyl modification enzyme MnmG (633 aa).

FAD is bound by residues 15 to 20 (GAGHAG), Val-127, and Ser-182. 276–290 (GPRYCPSIEDKIVRF) is a binding site for NAD(+). Residue Gln-373 participates in FAD binding.

This sequence belongs to the MnmG family. In terms of assembly, homodimer. Heterotetramer of two MnmE and two MnmG subunits. FAD serves as cofactor.

It localises to the cytoplasm. Functionally, NAD-binding protein involved in the addition of a carboxymethylaminomethyl (cmnm) group at the wobble position (U34) of certain tRNAs, forming tRNA-cmnm(5)s(2)U34. The polypeptide is tRNA uridine 5-carboxymethylaminomethyl modification enzyme MnmG (Streptococcus thermophilus (strain ATCC BAA-491 / LMD-9)).